The following is a 169-amino-acid chain: S-ribosylhomocysteine lyase (169 aa).

Residues His54, His58, and Cys129 each coordinate Fe cation.

It belongs to the LuxS family. Homodimer. Fe cation serves as cofactor.

The enzyme catalyses S-(5-deoxy-D-ribos-5-yl)-L-homocysteine = (S)-4,5-dihydroxypentane-2,3-dione + L-homocysteine. Its function is as follows. Involved in the synthesis of autoinducer 2 (AI-2) which is secreted by bacteria and is used to communicate both the cell density and the metabolic potential of the environment. The regulation of gene expression in response to changes in cell density is called quorum sensing. Catalyzes the transformation of S-ribosylhomocysteine (RHC) to homocysteine (HC) and 4,5-dihydroxy-2,3-pentadione (DPD). The chain is S-ribosylhomocysteine lyase from Haemophilus ducreyi (strain 35000HP / ATCC 700724).